A 98-amino-acid polypeptide reads, in one-letter code: Class II hydrophobin 5 (98 aa).

The N-terminal stretch at methionine 1–alanine 17 is a signal peptide. 4 disulfide bridges follow: cysteine 30–cysteine 78, cysteine 39–cysteine 69, cysteine 40–cysteine 52, and cysteine 79–cysteine 90.

The protein belongs to the cerato-ulmin hydrophobin family.

Its subcellular location is the secreted. It localises to the cell wall. Aerial growth, conidiation, and dispersal of filamentous fungi in the environment rely upon a capability of their secreting small amphipathic proteins called hydrophobins (HPBs) with low sequence identity. Class I can self-assemble into an outermost layer of rodlet bundles on aerial cell surfaces, conferring cellular hydrophobicity that supports fungal growth, development and dispersal; whereas Class II form highly ordered films at water-air interfaces through intermolecular interactions but contribute nothing to the rodlet structure. Does not seem to be important for the ability to cause seedling disease. The chain is Class II hydrophobin 5 from Gibberella moniliformis (Maize ear and stalk rot fungus).